A 102-amino-acid chain; its full sequence is NADH-quinone oxidoreductase subunit K (102 aa).

Transmembrane regions (helical) follow at residues 6–26 (MEHGLLLAAILFCIGLCGLLI), 30–50 (LLFILMSIEIMMNASALAFVV), and 65–85 (ILVISLAAAEASIGLALLLLL).

It belongs to the complex I subunit 4L family. As to quaternary structure, NDH-1 is composed of 14 different subunits. Subunits NuoA, H, J, K, L, M, N constitute the membrane sector of the complex.

It localises to the cell inner membrane. It carries out the reaction a quinone + NADH + 5 H(+)(in) = a quinol + NAD(+) + 4 H(+)(out). Functionally, NDH-1 shuttles electrons from NADH, via FMN and iron-sulfur (Fe-S) centers, to quinones in the respiratory chain. The immediate electron acceptor for the enzyme in this species is believed to be ubiquinone. Couples the redox reaction to proton translocation (for every two electrons transferred, four hydrogen ions are translocated across the cytoplasmic membrane), and thus conserves the redox energy in a proton gradient. This is NADH-quinone oxidoreductase subunit K from Aeromonas salmonicida (strain A449).